The sequence spans 124 residues: Small ribosomal subunit protein uS13 (124 aa).

Residues 94–124 (GLPLRGQRTKNNSRTRKGKRKTVANKKKATK) form a disordered region. Positions 100–124 (QRTKNNSRTRKGKRKTVANKKKATK) are enriched in basic residues.

This sequence belongs to the universal ribosomal protein uS13 family. In terms of assembly, part of the 30S ribosomal subunit. Forms a loose heterodimer with protein S19. Forms two bridges to the 50S subunit in the 70S ribosome.

Located at the top of the head of the 30S subunit, it contacts several helices of the 16S rRNA. In the 70S ribosome it contacts the 23S rRNA (bridge B1a) and protein L5 of the 50S subunit (bridge B1b), connecting the 2 subunits; these bridges are implicated in subunit movement. Contacts the tRNAs in the A and P-sites. This is Small ribosomal subunit protein uS13 from Flavobacterium psychrophilum (strain ATCC 49511 / DSM 21280 / CIP 103535 / JIP02/86).